The chain runs to 567 residues: Adenine deaminase 2 (567 aa).

The protein belongs to the metallo-dependent hydrolases superfamily. Adenine deaminase family. It depends on Mn(2+) as a cofactor.

It carries out the reaction adenine + H2O + H(+) = hypoxanthine + NH4(+). This is Adenine deaminase 2 from Oenococcus oeni (strain ATCC BAA-331 / PSU-1).